Reading from the N-terminus, the 1203-residue chain is Exonuclease/helicase subunit RexA (1203 aa).

The UvrD-like helicase ATP-binding domain occupies 4 to 472; it reads VKLTPEQNEA…IRLKENFRSR (469 aa). 25–32 serves as a coordination point for ATP; that stretch reads ASAGSGKT. The 283-residue stretch at 503-785 folds into the UvrD-like helicase C-terminal domain; sequence VQGNISDYPV…RVMTFHKSKG (283 aa).

Belongs to the helicase family. AddA subfamily. In terms of assembly, heterodimer of RexA (AddA) and RexB. Mg(2+) is required as a cofactor.

It catalyses the reaction Couples ATP hydrolysis with the unwinding of duplex DNA by translocating in the 3'-5' direction.. The catalysed reaction is ATP + H2O = ADP + phosphate + H(+). The heterodimer acts both as an ATP-dependent DNA helicase and an ATP-dependent, dual-direction single-stranded exonuclease. Recognizes the L.lactis chi site (5'-GCGCGTG-3'), which stimulates homologous recombination. The RexA (AddA) nuclease domain is required for chi fragment generation; this subunit has 3'-&gt;5' exonuclease activity and probably also performs the helicase function. The protein is Exonuclease/helicase subunit RexA of Lactococcus lactis subsp. cremoris (strain MG1363).